The following is a 156-amino-acid chain: Protein E6 (156 aa).

2 zinc fingers span residues 40–76 (CNFCGRFLDYLEVCEFDYKKLTLIWKDYSVYACCRLC) and 113–149 (CHTCLSFLDIIEKLDSCGRGLPFHKVRNAWKGVCRQC).

This sequence belongs to the papillomaviridae E6 protein family. In terms of assembly, forms homodimers. Interacts with ubiquitin-protein ligase UBE3A/E6-AP; this interaction stimulates UBE3A ubiquitin activity. Interacts with host BAK1.

The protein localises to the host cytoplasm. It is found in the host nucleus. Its function is as follows. Plays a major role in the induction and maintenance of cellular transformation. E6 associates with host UBE3A/E6-AP ubiquitin-protein ligase and modulates its activity. Protects host keratinocytes from apoptosis by mediating the degradation of host BAK1. May also inhibit host immune response. This is Protein E6 from Homo sapiens (Human).